We begin with the raw amino-acid sequence, 214 residues long: Ras-related protein Rab-17 (214 aa).

The residue at position 29 (Ser-29) is a Phosphoserine. Positions 31, 32, 33, and 50 each coordinate GTP. Residues Thr-33, Thr-50, and Asp-73 each contribute to the Mg(2+) site. The Switch 1 signature appears at 43–54; the sequence is DFSNVLPTVGCA. Positions 75-91 match the Switch 2 motif; it reads AGQEKYQSVCHLYFRGA. GTP is bound by residues Gly-76, Asn-132, Lys-133, Asp-135, and Ala-163. Residues 183–204 are disordered; it reads RAGDTGSSRPQEGEAVALNQEP. S-geranylgeranyl cysteine attachment occurs at residues Cys-211 and Cys-212.

Belongs to the small GTPase superfamily. Rab family. Requires Mg(2+) as cofactor. Expressed in kidney, liver, and intestine mainly by epithelial cells. Expressed in hippocampus (at protein level).

It is found in the recycling endosome membrane. It localises to the melanosome. The protein resides in the cell projection. The protein localises to the dendrite. The catalysed reaction is GTP + H2O = GDP + phosphate + H(+). With respect to regulation, regulated by guanine nucleotide exchange factors (GEFs) which promote the exchange of bound GDP for free GTP. Regulated by GTPase activating proteins (GAPs) which increase the GTP hydrolysis activity. Inhibited by GDP dissociation inhibitors (GDIs). The small GTPases Rab are key regulators of intracellular membrane trafficking, from the formation of transport vesicles to their fusion with membranes. Rabs cycle between an inactive GDP-bound form and an active GTP-bound form that is able to recruit to membranes different set of downstream effectors directly responsible for vesicle formation, movement, tethering and fusion. RAB17 is involved in transcytosis, the directed movement of endocytosed material through the cell and its exocytosis from the plasma membrane at the opposite side. Mainly observed in epithelial cells, transcytosis mediates, for instance, the transcellular transport of immunoglobulins from the basolateral surface to the apical surface. Most probably controls membrane trafficking through apical recycling endosomes in a post-endocytic step of transcytosis. Required for melanosome transport and release from melanocytes, it also regulates dendrite and dendritic spine development. May also play a role in cell migration. The chain is Ras-related protein Rab-17 from Mus musculus (Mouse).